We begin with the raw amino-acid sequence, 668 residues long: MPASLLPPTFLPHHLRRLAPAGCTTSSVTSSSVSIPASRYDFEPLLAYLSSPSVSASLTSPSPPASVPAPEHRLAASYSAVPSHEWHALLRDLAASDASLPLAFALLPFLHRHRLCFPLDLLLSSLLHSLSVSGRLLPHSLLLSFPPSLSDPPSPLLLNSLLAASAAASRPAVALRLLSLLREHDFLPDLASYSHLLASLLNTRDPPDAALLERLLGDLRESRLEPDAPLFSDLISAFARAALPDAALELLASAQAIGLTPRSNAVTALISALGTAGRVAEAEALFLEFFLAGEIKPRTRAYNALLKGYVRIASLKNAEQVLDEMSQCGVAPDEATYSLLVDAYTRAGRWESARILLKEMEADGVKPSSYVFSRILAGFRDRGDWQKAFAVLREMQASGVRPDRHFYNVMIDTFGKYNCLGHAMDAFNKMREEGIEPDVVTWNTLIDAHCKGGRHDRAAELFEEMRESNCPPGTTTYNIMINLLGEQEHWEGVEAMLSEMKEQGLVPNIITYTTLVDVYGRSGRYKEAIDCIEAMKADGLKPSPTMYHALVNAYAQRGLADHALNVVKAMKADGLEVSILVLNSLINAFGEDRRVVEAFSVLQFMRENGLRPDVITYTTLMKALIRVEQFDKVPVIYEEMITSGCAPDRKARAMLRSGLKYIKHMRVA.

The N-terminal 64 residues, 1-64 (MPASLLPPTF…SASLTSPSPP (64 aa)), are a transit peptide targeting the chloroplast. PPR repeat units follow at residues 154-188 (SPLLLNSLLAASAAASRPAVALRLLSLLREHDFLP), 189-226 (DLASYSHLLASLLNTRDPPDAALLERLLGDLRESRLEP), 227-261 (DAPLFSDLISAFARAALPDAALELLASAQAIGLTP), 262-297 (RSNAVTALISALGTAGRVAEAEALFLEFFLAGEIKP), 298-332 (RTRAYNALLKGYVRIASLKNAEQVLDEMSQCGVAP), 333-367 (DEATYSLLVDAYTRAGRWESARILLKEMEADGVKP), 368-402 (SSYVFSRILAGFRDRGDWQKAFAVLREMQASGVRP), 403-437 (DRHFYNVMIDTFGKYNCLGHAMDAFNKMREEGIEP), 438-472 (DVVTWNTLIDAHCKGGRHDRAAELFEEMRESNCPP), 473-507 (GTTTYNIMINLLGEQEHWEGVEAMLSEMKEQGLVP), 508-542 (NIITYTTLVDVYGRSGRYKEAIDCIEAMKADGLKP), 543-577 (SPTMYHALVNAYAQRGLADHALNVVKAMKADGLEV), 578-612 (SILVLNSLINAFGEDRRVVEAFSVLQFMRENGLRP), and 613-647 (DVITYTTLMKALIRVEQFDKVPVIYEEMITSGCAP).

It belongs to the PPR family. P subfamily. As to quaternary structure, component of a multisubunit complex.

It localises to the plastid. The protein localises to the chloroplast stroma. Required for the translation of the chloroplast petA and petD mRNAs. Required for the processing of the petD mRNA from a polycistronic precursor. Binds with high affinity to the 5'-UTR of the chloroplastic petA transcript. Activates psaC and petA translation by binding their 5'-UTRs. The protein is Pentatricopeptide repeat-containing protein CRP1, chloroplastic of Zea mays (Maize).